The primary structure comprises 415 residues: Putative transcription factor BOFH (415 aa).

The disordered stretch occupies residues 159–221; that stretch reads SQEPVQHQDQ…NEGEDDDGMD (63 aa). Positions 174–183 are enriched in gly residues; that stretch reads INGGGRGGYW. Over residues 193–202 the composition is skewed to basic residues; sequence QQQRRRKKRL. The span at 206 to 220 shows a compositional bias: acidic residues; the sequence is ETDDDGNEGEDDDGM. 3 DNA-binding regions span residues 234–238, 303–310, and 374–377; these read REHPF, NKPKMRHY, and YVPT.

It belongs to the FLO/LFY family. Acts in the floral primordia.

Its subcellular location is the nucleus. In terms of biological role, controls floral meristem identity. Is required very early in flower development and may act here as a transcription factor. This is Putative transcription factor BOFH from Brassica oleracea var. botrytis (Cauliflower).